The chain runs to 481 residues: Cytochrome P450 monooxygenase dpfgJ (481 aa).

The helical transmembrane segment at 23–43 (LVFTQAAVIGSILFVFLLGLY) threads the bilayer. Asn338 carries an N-linked (GlcNAc...) asparagine glycan. Cys427 is a heme binding site.

The protein belongs to the cytochrome P450 family. Heme serves as cofactor.

Its subcellular location is the membrane. It participates in secondary metabolite biosynthesis; terpenoid biosynthesis. Cytochrome P450 monooxygenase; part of the gene cluster that mediates the biosynthesis of diterpenoid pyrones. The first step of the pathway is the synthesis of the alpha-pyrone moiety by the polyketide synthase dpfgA via condensation of one acetyl-CoA starter unit with 3 malonyl-CoA units and 2 methylations. The alpha-pyrone is then combined with geranylgeranyl pyrophosphate (GGPP) formed by the GGPP synthase dpfgD through the action of the prenyltransferase dpfgC to yield a linear alpha-pyrone diterpenoid. Subsequent steps in the diterpenoid pyrone biosynthetic pathway involve the decalin core formation, which is initiated by the epoxidation of the C10-C11 olefin by the FAD-dependent oxidoreductase dpfgE, and is followed by a cyclization cascade catalyzed by the terpene cyclase dpfgB. The short chain dehydrogenase/reductase dpfgG then oxidizes the 8S hydroxy group to a ketone and the short chain dehydrogenase/reductase dpfgH reduces the ketone to the 8R hydroxy group to yield higginsianin B. Higginsianin B is further methylated by the methyltransferase dpfgI to produce the intermediate named FDDP B. The cytochrome P450 monooxygenase dfgpJ then catalyzes a three-step oxidation at C-27 to generate a carboxylic acid as well as C-26 hydroxylation. Finally, methyltransferase dpfgK methylates the carboxylic acid generated by dpfgJ, yielding the final diterpenoid pyrones from the pathway which were named FDDP D and FDDP E. The chain is Cytochrome P450 monooxygenase dpfgJ from Gibberella zeae (strain ATCC MYA-4620 / CBS 123657 / FGSC 9075 / NRRL 31084 / PH-1) (Wheat head blight fungus).